A 382-amino-acid polypeptide reads, in one-letter code: Gas vesicle protein C1 (382 aa).

Over residues 1–18 (MSVTDKRDEMSTARDKFA) the composition is skewed to basic and acidic residues. Positions 1–21 (MSVTDKRDEMSTARDKFAESQ) are disordered. Repeat copies occupy residues 22–60 (QEFE…TNTT), 61–92 (DAFH…REMQ), 93–130 (DAFE…NSTH), 131–168 (GAFE…IAVQ), 169–200 (DAFD…DATA), 201–240 (DAFA…ETTE), and 241–284 (DAFV…VSPD). A 7 X approximate tandem repeats region spans residues 22–284 (QEFESYADEF…VEAEAEVSPD (263 aa)). Acidic residues predominate over residues 260–302 (GAAEAEAEPVEADADVEAEAEVSPDEAGGESAGTEEEETEPAE). The segment at 260-382 (GAAEAEAEPV…DVPLRPDDKT (123 aa)) is disordered. The span at 303–316 (VETAAPEVEGSPAD) shows a compositional bias: low complexity. Residues 317-336 (TADEAEDTEAEEETEEEAPE) show a composition bias toward acidic residues. Over residues 365 to 382 (EYRDEYGEDVPLRPDDKT) the composition is skewed to basic and acidic residues.

This sequence belongs to the halobacterial gas vesicle GvpC family. As to quaternary structure, forms homodimers, interacts with GvpF1, GvpH1, GvpI1, GvpL1, GvpN1 and GvpO1 via its C-terminus (residues 329-382).

It localises to the gas vesicle. The protein localises to the cytoplasm. Functionally, confers stability, involved in shaping gas vesicles. Gas vesicles are hollow, gas filled proteinaceous nanostructures found in several microbial planktonic microorganisms. They allow positioning of halobacteria at the optimal depth for growth in the poorly aerated, shallow brine pools of their habitat. Its function is as follows. Expression of a 9.5 kb p-vac DNA fragment containing 2 divergently transcribed regions (gvpD-gvpE-gvpF-gvpG-gvpH-gvpI-gvpJ-gvpK-gvpL-gvpM and gvpA-gvpC-gvpN-gvpO) allows H.volcanii to produce gas vesicles. A similar region restores gas vesicle production in H.halobium without the p-vac locus, but it still has the c-vac locus. This Halobacterium salinarum (strain ATCC 700922 / JCM 11081 / NRC-1) (Halobacterium halobium) protein is Gas vesicle protein C1 (gvpC1).